The sequence spans 214 residues: Thymidylate kinase (214 aa).

ATP is bound at residue 9-16; sequence GIEGCGKT.

The protein belongs to the thymidylate kinase family.

It catalyses the reaction dTMP + ATP = dTDP + ADP. Phosphorylation of dTMP to form dTDP in both de novo and salvage pathways of dTTP synthesis. The sequence is that of Thymidylate kinase from Geotalea daltonii (strain DSM 22248 / JCM 15807 / FRC-32) (Geobacter daltonii).